The following is a 221-amino-acid chain: MESPSARTLGNSLGDDSGNGNENGNGSGNGNTTMMPHGIYHERQTRHLCGLHALNNLFQGPDMFSKSELDDYCTTLTPRNWLNPHRSWIGWGNYDVNVIMYALQQRNCEAVWFDRRRDPHCLNLSVIFGFILNVPAQMSLGYYIPLPFHMRHWLALRRLNGSYYNLDSKLREPKCLGTEQQFLEFLATQLQMDHELFLVLDEETDCKDKSQQRWLLPQFRD.

Residues 1-37 (MESPSARTLGNSLGDDSGNGNENGNGSGNGNTTMMPH) form a disordered region. Residues 9–20 (LGNSLGDDSGNG) show a composition bias toward low complexity. The Josephin domain maps to 36–214 (PHGIYHERQT…DCKDKSQQRW (179 aa)). The Nucleophile role is filled by Cys-49. The active-site Proton acceptor is the His-152.

The catalysed reaction is Thiol-dependent hydrolysis of ester, thioester, amide, peptide and isopeptide bonds formed by the C-terminal Gly of ubiquitin (a 76-residue protein attached to proteins as an intracellular targeting signal).. May act as a deubiquitinating enzyme. The polypeptide is Josephin-like protein (Drosophila melanogaster (Fruit fly)).